The following is a 462-amino-acid chain: Glycine--tRNA ligase (462 aa).

Substrate is bound by residues R100 and E170. Residues 202-204 (RNE), 212-217 (FRTREF), 287-288 (EL), and 331-334 (GVER) contribute to the ATP site. 217–221 (FEQME) serves as a coordination point for substrate. 327–331 (EPSVG) contributes to the substrate binding site.

Belongs to the class-II aminoacyl-tRNA synthetase family. In terms of assembly, homodimer.

The protein resides in the cytoplasm. The catalysed reaction is tRNA(Gly) + glycine + ATP = glycyl-tRNA(Gly) + AMP + diphosphate. In terms of biological role, catalyzes the attachment of glycine to tRNA(Gly). This Malacoplasma penetrans (strain HF-2) (Mycoplasma penetrans) protein is Glycine--tRNA ligase.